The primary structure comprises 242 residues: 2-C-methyl-D-erythritol 4-phosphate cytidylyltransferase (242 aa).

It belongs to the IspD/TarI cytidylyltransferase family. IspD subfamily.

It catalyses the reaction 2-C-methyl-D-erythritol 4-phosphate + CTP + H(+) = 4-CDP-2-C-methyl-D-erythritol + diphosphate. It participates in isoprenoid biosynthesis; isopentenyl diphosphate biosynthesis via DXP pathway; isopentenyl diphosphate from 1-deoxy-D-xylulose 5-phosphate: step 2/6. Its function is as follows. Catalyzes the formation of 4-diphosphocytidyl-2-C-methyl-D-erythritol from CTP and 2-C-methyl-D-erythritol 4-phosphate (MEP). In Halorhodospira halophila (strain DSM 244 / SL1) (Ectothiorhodospira halophila (strain DSM 244 / SL1)), this protein is 2-C-methyl-D-erythritol 4-phosphate cytidylyltransferase.